Consider the following 313-residue polypeptide: Methionyl-tRNA formyltransferase (313 aa).

109–112 (SLLP) contributes to the (6S)-5,6,7,8-tetrahydrofolate binding site.

It belongs to the Fmt family.

It carries out the reaction L-methionyl-tRNA(fMet) + (6R)-10-formyltetrahydrofolate = N-formyl-L-methionyl-tRNA(fMet) + (6S)-5,6,7,8-tetrahydrofolate + H(+). Attaches a formyl group to the free amino group of methionyl-tRNA(fMet). The formyl group appears to play a dual role in the initiator identity of N-formylmethionyl-tRNA by promoting its recognition by IF2 and preventing the misappropriation of this tRNA by the elongation apparatus. The sequence is that of Methionyl-tRNA formyltransferase from Pelotomaculum thermopropionicum (strain DSM 13744 / JCM 10971 / SI).